The primary structure comprises 558 residues: Glucose-6-phosphate isomerase (558 aa).

Residue Ala-2 is modified to N-acetylalanine. Lys-12 bears the N6-acetyllysine mark. Lys-34 is modified (N6-(2-hydroxyisobutyryl)lysine). At Ser-107 the chain carries Phosphoserine. Thr-109 carries the post-translational modification Phosphothreonine. Residue Lys-142 is modified to N6-acetyllysine. Position 159–160 (159–160 (GS)) interacts with D-glucose 6-phosphate. Ser-185 bears the Phosphoserine; by CK2 mark. Residue 210-215 (SKTFTT) participates in D-glucose 6-phosphate binding. Residue Thr-250 is modified to Phosphothreonine. 3 residues coordinate D-glucose 6-phosphate: Gln-354, Glu-358, and His-389. Glu-358 serves as the catalytic Proton donor. His-389 is a catalytic residue. The residue at position 454 (Lys-454) is an N6-acetyllysine; alternate. The residue at position 454 (Lys-454) is an N6-malonyllysine; alternate. An N6-succinyllysine; alternate modification is found at Lys-454. Residue Ser-455 is modified to Phosphoserine. Residue Lys-519 coordinates D-glucose 6-phosphate. The active site involves Lys-519.

It belongs to the GPI family. In terms of assembly, homodimer; in the catalytically active form. Monomer in the secreted form. Post-translationally, phosphorylation at Ser-185 by CK2 has been shown to decrease enzymatic activity and may contribute to secretion by a non-classical secretory pathway. ISGylated.

It localises to the cytoplasm. It is found in the secreted. The enzyme catalyses alpha-D-glucose 6-phosphate = beta-D-fructose 6-phosphate. It participates in carbohydrate degradation; glycolysis; D-glyceraldehyde 3-phosphate and glycerone phosphate from D-glucose: step 2/4. Its activity is regulated as follows. Strongly inhibited by erythrose 4-phosphate. Functionally, in the cytoplasm, catalyzes the conversion of glucose-6-phosphate to fructose-6-phosphate, the second step in glycolysis, and the reverse reaction during gluconeogenesis. Besides it's role as a glycolytic enzyme, also acts as a secreted cytokine: acts as an angiogenic factor (AMF) that stimulates endothelial cell motility. Acts as a neurotrophic factor, neuroleukin, for spinal and sensory neurons. It is secreted by lectin-stimulated T-cells and induces immunoglobulin secretion. The chain is Glucose-6-phosphate isomerase from Homo sapiens (Human).